We begin with the raw amino-acid sequence, 399 residues long: Acetate kinase (399 aa).

Residue N7 participates in Mg(2+) binding. K14 lines the ATP pocket. R91 is a binding site for substrate. Residue D148 is the Proton donor/acceptor of the active site. ATP-binding positions include 208-212, 283-285, and 331-335; these read HLGNG, DFR, and GIGEN. A Mg(2+)-binding site is contributed by E384.

The protein belongs to the acetokinase family. Homodimer. The cofactor is Mg(2+). It depends on Mn(2+) as a cofactor.

It localises to the cytoplasm. The enzyme catalyses acetate + ATP = acetyl phosphate + ADP. It functions in the pathway metabolic intermediate biosynthesis; acetyl-CoA biosynthesis; acetyl-CoA from acetate: step 1/2. Functionally, catalyzes the formation of acetyl phosphate from acetate and ATP. Can also catalyze the reverse reaction. The sequence is that of Acetate kinase from Acetivibrio thermocellus (strain ATCC 27405 / DSM 1237 / JCM 9322 / NBRC 103400 / NCIMB 10682 / NRRL B-4536 / VPI 7372) (Clostridium thermocellum).